The primary structure comprises 154 residues: Myoglobin (154 aa).

A Globin domain is found at 2–148; it reads GLSDGEWQLV…FRNDMAAKYK (147 aa). Ser-4 carries the phosphoserine modification. A nitrite-binding site is contributed by His-65. His-65 contacts O2. Phosphothreonine is present on Thr-68. Heme b is bound at residue His-94.

It belongs to the globin family. In terms of assembly, monomeric.

Its subcellular location is the cytoplasm. The protein localises to the sarcoplasm. It catalyses the reaction Fe(III)-heme b-[protein] + nitric oxide + H2O = Fe(II)-heme b-[protein] + nitrite + 2 H(+). The catalysed reaction is H2O2 + AH2 = A + 2 H2O. In terms of biological role, monomeric heme protein which primary function is to store oxygen and facilitate its diffusion within muscle tissues. Reversibly binds oxygen through a pentacoordinated heme iron and enables its timely and efficient release as needed during periods of heightened demand. Depending on the oxidative conditions of tissues and cells, and in addition to its ability to bind oxygen, it also has a nitrite reductase activity whereby it regulates the production of bioactive nitric oxide. Under stress conditions, like hypoxia and anoxia, it also protects cells against reactive oxygen species thanks to its pseudoperoxidase activity. The chain is Myoglobin (MB) from Sapajus apella (Brown-capped capuchin).